Consider the following 79-residue polypeptide: Conotoxin ArMSGL-0122 (79 aa).

Positions methionine 1–serine 20 are cleaved as a signal peptide. Residues histidine 21–threonine 44 constitute a propeptide that is removed on maturation. Intrachain disulfides connect cysteine 52–cysteine 64, cysteine 56–cysteine 73, and cysteine 63–cysteine 77. Leucine amide is present on leucine 78.

The protein belongs to the conotoxin O3 superfamily. Expressed by the venom duct.

The protein resides in the secreted. This Conus arenatus (Sand-dusted cone) protein is Conotoxin ArMSGL-0122.